A 730-amino-acid chain; its full sequence is Elongation factor 2 (730 aa).

Residues 19–260 form the tr-type G domain; sequence VMIRNIAIIA…MVIRFLPSPI (242 aa). GTP contacts are provided by residues 28-35, 94-98, and 148-151; these read AHIDHGKT, DTPGH, and NKVD. Histidine 596 is subject to Diphthamide.

Belongs to the TRAFAC class translation factor GTPase superfamily. Classic translation factor GTPase family. EF-G/EF-2 subfamily.

It is found in the cytoplasm. Its function is as follows. Catalyzes the GTP-dependent ribosomal translocation step during translation elongation. During this step, the ribosome changes from the pre-translocational (PRE) to the post-translocational (POST) state as the newly formed A-site-bound peptidyl-tRNA and P-site-bound deacylated tRNA move to the P and E sites, respectively. Catalyzes the coordinated movement of the two tRNA molecules, the mRNA and conformational changes in the ribosome. This is Elongation factor 2 (fusA) from Methanococcoides methylutens.